The following is a 255-amino-acid chain: Thiazole synthase (255 aa).

Lysine 96 acts as the Schiff-base intermediate with DXP in catalysis. 1-deoxy-D-xylulose 5-phosphate-binding positions include glycine 157, 183 to 184 (AG), and 205 to 206 (NS).

This sequence belongs to the ThiG family. Homotetramer. Forms heterodimers with either ThiH or ThiS.

It is found in the cytoplasm. The enzyme catalyses [ThiS sulfur-carrier protein]-C-terminal-Gly-aminoethanethioate + 2-iminoacetate + 1-deoxy-D-xylulose 5-phosphate = [ThiS sulfur-carrier protein]-C-terminal Gly-Gly + 2-[(2R,5Z)-2-carboxy-4-methylthiazol-5(2H)-ylidene]ethyl phosphate + 2 H2O + H(+). The protein operates within cofactor biosynthesis; thiamine diphosphate biosynthesis. Its function is as follows. Catalyzes the rearrangement of 1-deoxy-D-xylulose 5-phosphate (DXP) to produce the thiazole phosphate moiety of thiamine. Sulfur is provided by the thiocarboxylate moiety of the carrier protein ThiS. In vitro, sulfur can be provided by H(2)S. This is Thiazole synthase from Staphylococcus carnosus (strain TM300).